Here is a 662-residue protein sequence, read N- to C-terminus: DNA ligase (662 aa).

NAD(+) contacts are provided by residues 34-38 (DYDYD), 83-84 (SI), and E113. The active-site N6-AMP-lysine intermediate is the K115. Residues R136, E172, K286, and K310 each contribute to the NAD(+) site. Zn(2+)-binding residues include C404, C407, C422, and C427. A BRCT domain is found at 583–662 (RASASCQGKT…SDLLKILYPN (80 aa)).

This sequence belongs to the NAD-dependent DNA ligase family. LigA subfamily. Requires Mg(2+) as cofactor. It depends on Mn(2+) as a cofactor.

The catalysed reaction is NAD(+) + (deoxyribonucleotide)n-3'-hydroxyl + 5'-phospho-(deoxyribonucleotide)m = (deoxyribonucleotide)n+m + AMP + beta-nicotinamide D-nucleotide.. In terms of biological role, DNA ligase that catalyzes the formation of phosphodiester linkages between 5'-phosphoryl and 3'-hydroxyl groups in double-stranded DNA using NAD as a coenzyme and as the energy source for the reaction. It is essential for DNA replication and repair of damaged DNA. The polypeptide is DNA ligase (Chlamydia felis (strain Fe/C-56) (Chlamydophila felis)).